Consider the following 213-residue polypeptide: tRNA (guanine-N(7)-)-methyltransferase (213 aa).

4 residues coordinate S-adenosyl-L-methionine: Glu44, Glu69, Asp96, and Asp118. Residue Asp118 is part of the active site. Substrate-binding positions include Lys122, Asp154, and 192–195; that span reads TEYE.

The protein belongs to the class I-like SAM-binding methyltransferase superfamily. TrmB family.

The enzyme catalyses guanosine(46) in tRNA + S-adenosyl-L-methionine = N(7)-methylguanosine(46) in tRNA + S-adenosyl-L-homocysteine. Its pathway is tRNA modification; N(7)-methylguanine-tRNA biosynthesis. In terms of biological role, catalyzes the formation of N(7)-methylguanine at position 46 (m7G46) in tRNA. The sequence is that of tRNA (guanine-N(7)-)-methyltransferase from Limosilactobacillus reuteri (strain DSM 20016) (Lactobacillus reuteri).